Consider the following 205-residue polypeptide: Keratin-associated protein 4-6 (205 aa).

30 consecutive repeat copies span residues 20–24, 25–29, 30–34, 35–39, 40–44, 45–49, 50–54, 55–59, 60–64, 65–68, 69–73, 74–78, 79–83, 84–88, 89–93, 94–98, 99–103, 104–108, 114–118, 119–123, 124–128, 129–133, 134–138, 139–143, 144–148, 149–153, 154–158, 159–163, 164–168, and 169–173. The tract at residues 20–173 is 30 X 5 AA repeats of C-C-[IRQVEL]-[SPTR]-[STVQRCP]; the sequence is CCRPSCCQTT…CCRPCCCLRP (154 aa).

The protein belongs to the KRTAP type 4 family. As to quaternary structure, interacts with hair keratins. As to expression, expressed in the hair follicles.

Its function is as follows. In the hair cortex, hair keratin intermediate filaments are embedded in an interfilamentous matrix, consisting of hair keratin-associated proteins (KRTAP), which are essential for the formation of a rigid and resistant hair shaft through their extensive disulfide bond cross-linking with abundant cysteine residues of hair keratins. The matrix proteins include the high-sulfur and high-glycine-tyrosine keratins. The sequence is that of Keratin-associated protein 4-6 (KRTAP4-6) from Homo sapiens (Human).